Consider the following 477-residue polypeptide: Trigger factor (477 aa).

Residues 163-248 (ENLVIFDYKA…ITEVKKSEEV (86 aa)) enclose the PPIase FKBP-type domain. The segment covering 408 to 461 (KAKPSKKEISKEEAEKILKEHQKQDHNHEHDHNHDHDHPEEKKASKSTKIEKKP) has biased composition (basic and acidic residues). Residues 408-477 (KAKPSKKEIS…KPSTKKVSKK (70 aa)) form a disordered region.

Belongs to the FKBP-type PPIase family. Tig subfamily.

It is found in the cytoplasm. The enzyme catalyses [protein]-peptidylproline (omega=180) = [protein]-peptidylproline (omega=0). Its function is as follows. Involved in protein export. Acts as a chaperone by maintaining the newly synthesized protein in an open conformation. Functions as a peptidyl-prolyl cis-trans isomerase. The chain is Trigger factor from Pelagibacter ubique (strain HTCC1062).